The sequence spans 191 residues: Salivary lipocalin (191 aa).

An N-terminal signal peptide occupies residues 1–16 (MKLLLLLCLGLTLASS). Asn69 carries N-linked (GlcNAc...) asparagine glycosylation. Cys84 and Cys176 are disulfide-bonded.

This sequence belongs to the calycin superfamily. Lipocalin family. In terms of assembly, homodimer. In the submaxillary salivary glands of mature male pigs, but absent from that of females. Expression was much lower in submaxillary glands of castrated male pigs than in sexually mature individuals.

It is found in the secreted. Its function is as follows. Binds pheromones, the pheromones are released from the saliva of males and affect the sexual behavior of females. In Sus scrofa (Pig), this protein is Salivary lipocalin (SAL1).